The primary structure comprises 426 residues: Histidine--tRNA ligase (426 aa).

Belongs to the class-II aminoacyl-tRNA synthetase family. Homodimer.

It is found in the cytoplasm. It catalyses the reaction tRNA(His) + L-histidine + ATP = L-histidyl-tRNA(His) + AMP + diphosphate + H(+). This Streptococcus pyogenes serotype M49 (strain NZ131) protein is Histidine--tRNA ligase.